The sequence spans 1589 residues: Pentafunctional AROM polypeptide (1589 aa).

Positions 1–384 (MAAPTTIKIL…HEQQASVVSN (384 aa)) are 3-dehydroquinate synthase. Residues 44-46 (DTT), 81-84 (ELSK), 114-116 (GGV), and D119 each bind NAD(+). Residue R130 participates in 7-phospho-2-dehydro-3-deoxy-D-arabino-heptonate binding. 139–140 (TT) provides a ligand contact to NAD(+). Residues D146 and K152 each contribute to the 7-phospho-2-dehydro-3-deoxy-D-arabino-heptonate site. An NAD(+)-binding site is contributed by K161. N162 serves as a coordination point for 7-phospho-2-dehydro-3-deoxy-D-arabino-heptonate. NAD(+) is bound by residues 179–182 (FLNT) and N190. E194 is a Zn(2+) binding site. 7-phospho-2-dehydro-3-deoxy-D-arabino-heptonate is bound by residues 194–197 (EVIK) and K250. The active-site Proton acceptor; for 3-dehydroquinate synthase activity is E260. 7-phospho-2-dehydro-3-deoxy-D-arabino-heptonate contacts are provided by residues 264 to 268 (RNLLN) and H271. Residue H271 coordinates Zn(2+). Catalysis depends on H275, which acts as the Proton acceptor; for 3-dehydroquinate synthase activity. Residues H287 and K356 each contribute to the 7-phospho-2-dehydro-3-deoxy-D-arabino-heptonate site. Residue H287 participates in Zn(2+) binding. The EPSP synthase stretch occupies residues 397–841 (VSPGVPKSLQ…WDTLAQLFKA (445 aa)). Catalysis depends on C823, which acts as the For EPSP synthase activity. The interval 861–1052 (ASIFIIGMRG…KKKPQSFFVS (192 aa)) is shikimate kinase. An ATP-binding site is contributed by 867–874 (GMRGAGKT). The 3-dehydroquinase stretch occupies residues 1053 to 1273 (LTLPDLRPSA…AAPGQLSAQD (221 aa)). H1176 functions as the Proton acceptor; for 3-dehydroquinate dehydratase activity in the catalytic mechanism. K1204 (schiff-base intermediate with substrate; for 3-dehydroquinate dehydratase activity) is an active-site residue. The shikimate dehydrogenase stretch occupies residues 1286–1589 (PRKFAIFGKP…VMNPGTDNRG (304 aa)).

The protein in the N-terminal section; belongs to the sugar phosphate cyclases superfamily. Dehydroquinate synthase family. In the 2nd section; belongs to the EPSP synthase family. It in the 3rd section; belongs to the shikimate kinase family. This sequence in the 4th section; belongs to the type-I 3-dehydroquinase family. The protein in the C-terminal section; belongs to the shikimate dehydrogenase family. As to quaternary structure, homodimer. Zn(2+) serves as cofactor.

It is found in the cytoplasm. The enzyme catalyses 7-phospho-2-dehydro-3-deoxy-D-arabino-heptonate = 3-dehydroquinate + phosphate. It catalyses the reaction 3-dehydroquinate = 3-dehydroshikimate + H2O. It carries out the reaction shikimate + NADP(+) = 3-dehydroshikimate + NADPH + H(+). The catalysed reaction is shikimate + ATP = 3-phosphoshikimate + ADP + H(+). The enzyme catalyses 3-phosphoshikimate + phosphoenolpyruvate = 5-O-(1-carboxyvinyl)-3-phosphoshikimate + phosphate. It functions in the pathway metabolic intermediate biosynthesis; chorismate biosynthesis; chorismate from D-erythrose 4-phosphate and phosphoenolpyruvate: step 2/7. Its pathway is metabolic intermediate biosynthesis; chorismate biosynthesis; chorismate from D-erythrose 4-phosphate and phosphoenolpyruvate: step 3/7. It participates in metabolic intermediate biosynthesis; chorismate biosynthesis; chorismate from D-erythrose 4-phosphate and phosphoenolpyruvate: step 4/7. The protein operates within metabolic intermediate biosynthesis; chorismate biosynthesis; chorismate from D-erythrose 4-phosphate and phosphoenolpyruvate: step 5/7. It functions in the pathway metabolic intermediate biosynthesis; chorismate biosynthesis; chorismate from D-erythrose 4-phosphate and phosphoenolpyruvate: step 6/7. Its function is as follows. The AROM polypeptide catalyzes 5 consecutive enzymatic reactions in prechorismate polyaromatic amino acid biosynthesis. The sequence is that of Pentafunctional AROM polypeptide from Coccidioides posadasii (strain C735) (Valley fever fungus).